The primary structure comprises 195 residues: Myelin-associated neurite-outgrowth inhibitor (195 aa).

N-acetylmethionine is present on M1. Topologically, residues 1-18 are cytoplasmic; sequence MNPVYSPGSSGVPYANAK. S6 carries the post-translational modification Phosphoserine. The chain crosses the membrane as a helical span at residues 19–42; that stretch reads GIGYPAGFPMGYAAAAPAYSPNMY. Over 43 to 142 the chain is Extracellular; it reads PGANPTFQAG…PAPLPPPRGN (100 aa). An N-linked (GlcNAc...) asparagine glycan is attached at N46. The chain crosses the membrane as a helical span at residues 143–164; that stretch reads GVTMGMVAGTTMAMSAGTLLTA. Residues 165–195 lie on the Cytoplasmic side of the membrane; it reads HSPTPVAPHPVTVPTYRAPGTPTYSYVPPQW.

It belongs to the FAM168 family. As to quaternary structure, may form homodimers. May interact with DAZAP2, FAM168A, PRDX6, RBM6, TMTC1 and YPEL2. Interacts with CDC27. In terms of processing, N-glycosylated.

The protein localises to the cytoplasm. It localises to the perinuclear region. Its subcellular location is the cell membrane. The protein resides in the cell projection. It is found in the axon. In terms of biological role, inhibitor of neuronal axonal outgrowth. Acts as a negative regulator of CDC42 and STAT3 and a positive regulator of STMN2. Positive regulator of CDC27. This is Myelin-associated neurite-outgrowth inhibitor (FAM168B) from Bos taurus (Bovine).